Here is a 299-residue protein sequence, read N- to C-terminus: Non-structural protein V (299 aa).

Disordered regions lie at residues 30-101 (QEVS…EEDT) and 128-163 (SLMVPAGPPSNRGFEGREGSLDDSIEDSSEDYSEGN). A compositionally biased stretch (basic and acidic residues) spans 79–99 (EDQRGREDNTAPVEAKDRIEE). Residues 148-160 (LDDSIEDSSEDYS) show a composition bias toward acidic residues. Zn(2+)-binding residues include histidine 232, cysteine 251, cysteine 255, cysteine 267, cysteine 269, cysteine 272, cysteine 276, and cysteine 279.

Functionally, blocks host interferon signaling. This Phocidae (true seals) protein is Non-structural protein V (P/V).